The following is a 369-amino-acid chain: Dual-specificity RNA methyltransferase RlmN (369 aa).

E96 acts as the Proton acceptor in catalysis. In terms of domain architecture, Radical SAM core spans 102-338; the sequence is DGERGTLCVS…VTTIRTTRGD (237 aa). Residues C109 and C344 are joined by a disulfide bond. [4Fe-4S] cluster is bound by residues C116, C120, and C123. Residues 169–170, S201, 223–225, and N301 each bind S-adenosyl-L-methionine; these read GE and SLH. The active-site S-methylcysteine intermediate is C344.

Belongs to the radical SAM superfamily. RlmN family. Requires [4Fe-4S] cluster as cofactor.

It is found in the cytoplasm. The catalysed reaction is adenosine(2503) in 23S rRNA + 2 reduced [2Fe-2S]-[ferredoxin] + 2 S-adenosyl-L-methionine = 2-methyladenosine(2503) in 23S rRNA + 5'-deoxyadenosine + L-methionine + 2 oxidized [2Fe-2S]-[ferredoxin] + S-adenosyl-L-homocysteine. The enzyme catalyses adenosine(37) in tRNA + 2 reduced [2Fe-2S]-[ferredoxin] + 2 S-adenosyl-L-methionine = 2-methyladenosine(37) in tRNA + 5'-deoxyadenosine + L-methionine + 2 oxidized [2Fe-2S]-[ferredoxin] + S-adenosyl-L-homocysteine. In terms of biological role, specifically methylates position 2 of adenine 2503 in 23S rRNA and position 2 of adenine 37 in tRNAs. m2A2503 modification seems to play a crucial role in the proofreading step occurring at the peptidyl transferase center and thus would serve to optimize ribosomal fidelity. The polypeptide is Dual-specificity RNA methyltransferase RlmN (Marinobacter nauticus (strain ATCC 700491 / DSM 11845 / VT8) (Marinobacter aquaeolei)).